The primary structure comprises 1025 residues: Leucyl-cystinyl aminopeptidase (1025 aa).

Position 1 is an N-acetylmethionine (M1). Topologically, residues 1–110 are cytoplasmic; the sequence is MEPFTNDRLQ…GACSVPSART (110 aa). Residues 53–54 carry the Dileucine internalization motif motif; that stretch reads LL. Residue Y70 is modified to Phosphotyrosine. A Dileucine internalization motif motif is present at residues 76–77; that stretch reads LL. S80 and S91 each carry phosphoserine. Residues 96–101 are tankyrase binding; it reads RQSPDG. A helical; Signal-anchor for type II membrane protein membrane pass occupies residues 111 to 131; sequence MVVCAFVIVVAVSVIMVIYLL. The Extracellular segment spans residues 132–1025; it reads PRCTFTKEGC…KNLKSLTWWL (894 aa). N-linked (GlcNAc...) asparagine glycosylation is found at N145, N184, N215, N256, and N266. E295 is a substrate binding site. Residues N368 and N374 are each glycosylated (N-linked (GlcNAc...) asparagine). 428–432 is a substrate binding site; the sequence is GAMEN. A glycan (N-linked (GlcNAc...) asparagine) is linked at N448. H464 provides a ligand contact to Zn(2+). E465 serves as the catalytic Proton acceptor. Zn(2+) is bound by residues H468 and E487. N525, N578, N598, N664, N682, N760, N834, N850, and N989 each carry an N-linked (GlcNAc...) asparagine glycan.

It belongs to the peptidase M1 family. As to quaternary structure, homodimer. Binds tankyrases 1 and 2. Zn(2+) is required as a cofactor. In terms of processing, the pregnancy serum form is derived from the membrane-bound form by proteolytic processing. N-glycosylated. In terms of tissue distribution, highly expressed in placenta, heart, kidney and small intestine. Detected at lower levels in neuronal cells in the brain, in skeletal muscle, spleen, liver, testes and colon.

The protein localises to the cell membrane. It localises to the secreted. The enzyme catalyses Release of an N-terminal amino acid, Cys-|-Xaa-, in which the half-cystine residue is involved in a disulfide loop, notably in oxytocin or vasopressin. Hydrolysis rates on a range of aminoacyl arylamides exceed that for the cystinyl derivative, however.. Release of an N-terminal amino acid, cleaves before cysteine, leucine as well as other amino acids. Degrades peptide hormones such as oxytocin, vasopressin and angiotensin III, and plays a role in maintaining homeostasis during pregnancy. May be involved in the inactivation of neuronal peptides in the brain. Cleaves Met-enkephalin and dynorphin. Binds angiotensin IV and may be the angiotensin IV receptor in the brain. The polypeptide is Leucyl-cystinyl aminopeptidase (LNPEP) (Homo sapiens (Human)).